We begin with the raw amino-acid sequence, 328 residues long: tRNA N6-adenosine threonylcarbamoyltransferase (328 aa).

Positions 111 and 115 each coordinate Fe cation. Residues 133–137 (LVSGG), aspartate 166, glycine 179, aspartate 183, and asparagine 270 contribute to the substrate site. A Fe cation-binding site is contributed by aspartate 296.

This sequence belongs to the KAE1 / TsaD family. It depends on Fe(2+) as a cofactor.

It is found in the cytoplasm. The catalysed reaction is L-threonylcarbamoyladenylate + adenosine(37) in tRNA = N(6)-L-threonylcarbamoyladenosine(37) in tRNA + AMP + H(+). Its function is as follows. Required for the formation of a threonylcarbamoyl group on adenosine at position 37 (t(6)A37) in tRNAs that read codons beginning with adenine. Is involved in the transfer of the threonylcarbamoyl moiety of threonylcarbamoyl-AMP (TC-AMP) to the N6 group of A37, together with TsaE and TsaB. TsaD likely plays a direct catalytic role in this reaction. The chain is tRNA N6-adenosine threonylcarbamoyltransferase from Phytoplasma australiense.